The primary structure comprises 233 residues: MKAICVLSGGLDSAVTSMFAKSKNYDISTVTFNYGQMALNQEIKSAKKISDILNADHHVIDINFVKEFSKSGLNTGNIPEPENEDLDDFEKSEKTMKAVWVPARNMIMFSIASGFAEGIGAEKIFSGLNKEEGVTFPDNTPEFIERFNKSLEYGTLNKVKMVAPLYELNKPEIAKLGKELELKLDLEVLKYSYSCYKDNGKDYLHCGTCESCMRRKRAFKEAGITDPTKYLVE.

7 to 17 contributes to the ATP binding site; that stretch reads LSGGLDSAVTS. Zn(2+) is bound by residues cysteine 195, cysteine 206, cysteine 209, and cysteine 212.

The protein belongs to the QueC family. It depends on Zn(2+) as a cofactor.

It carries out the reaction 7-carboxy-7-deazaguanine + NH4(+) + ATP = 7-cyano-7-deazaguanine + ADP + phosphate + H2O + H(+). The protein operates within purine metabolism; 7-cyano-7-deazaguanine biosynthesis. In terms of biological role, catalyzes the ATP-dependent conversion of 7-carboxy-7-deazaguanine (CDG) to 7-cyano-7-deazaguanine (preQ(0)). This chain is 7-cyano-7-deazaguanine synthase, found in Methanococcus maripaludis (strain DSM 14266 / JCM 13030 / NBRC 101832 / S2 / LL).